The sequence spans 487 residues: Glutamyl-tRNA(Gln) amidotransferase subunit A (487 aa).

Catalysis depends on charge relay system residues K79 and S154. The active-site Acyl-ester intermediate is S178.

Belongs to the amidase family. GatA subfamily. Heterotrimer of A, B and C subunits.

It catalyses the reaction L-glutamyl-tRNA(Gln) + L-glutamine + ATP + H2O = L-glutaminyl-tRNA(Gln) + L-glutamate + ADP + phosphate + H(+). Its function is as follows. Allows the formation of correctly charged Gln-tRNA(Gln) through the transamidation of misacylated Glu-tRNA(Gln) in organisms which lack glutaminyl-tRNA synthetase. The reaction takes place in the presence of glutamine and ATP through an activated gamma-phospho-Glu-tRNA(Gln). The chain is Glutamyl-tRNA(Gln) amidotransferase subunit A from Roseiflexus sp. (strain RS-1).